A 391-amino-acid polypeptide reads, in one-letter code: Alanine racemase (391 aa).

The active-site Proton acceptor; specific for D-alanine is lysine 38. Lysine 38 carries the N6-(pyridoxal phosphate)lysine modification. Residue arginine 136 participates in substrate binding. Tyrosine 267 (proton acceptor; specific for L-alanine) is an active-site residue. Methionine 315 contacts substrate.

The protein belongs to the alanine racemase family. Pyridoxal 5'-phosphate is required as a cofactor.

It carries out the reaction L-alanine = D-alanine. It functions in the pathway amino-acid biosynthesis; D-alanine biosynthesis; D-alanine from L-alanine: step 1/1. Functionally, catalyzes the interconversion of L-alanine and D-alanine. May also act on other amino acids. The sequence is that of Alanine racemase (alr) from Clostridium kluyveri (strain ATCC 8527 / DSM 555 / NBRC 12016 / NCIMB 10680 / K1).